The following is a 134-amino-acid chain: 6,7-dimethyl-8-ribityllumazine synthase (134 aa).

5-amino-6-(D-ribitylamino)uracil-binding positions include Phe-12, 44–46, and 68–70; these read VFD and SVI. (2S)-2-hydroxy-3-oxobutyl phosphate is bound at residue 73–74; that stretch reads ET. Catalysis depends on His-76, which acts as the Proton donor. Leu-101 lines the 5-amino-6-(D-ribitylamino)uracil pocket. Residue Arg-116 coordinates (2S)-2-hydroxy-3-oxobutyl phosphate.

It belongs to the DMRL synthase family.

The catalysed reaction is (2S)-2-hydroxy-3-oxobutyl phosphate + 5-amino-6-(D-ribitylamino)uracil = 6,7-dimethyl-8-(1-D-ribityl)lumazine + phosphate + 2 H2O + H(+). The protein operates within cofactor biosynthesis; riboflavin biosynthesis; riboflavin from 2-hydroxy-3-oxobutyl phosphate and 5-amino-6-(D-ribitylamino)uracil: step 1/2. In terms of biological role, catalyzes the formation of 6,7-dimethyl-8-ribityllumazine by condensation of 5-amino-6-(D-ribitylamino)uracil with 3,4-dihydroxy-2-butanone 4-phosphate. This is the penultimate step in the biosynthesis of riboflavin. The sequence is that of 6,7-dimethyl-8-ribityllumazine synthase from Methanosarcina mazei (strain ATCC BAA-159 / DSM 3647 / Goe1 / Go1 / JCM 11833 / OCM 88) (Methanosarcina frisia).